The primary structure comprises 374 residues: Peptide chain release factor 2 (374 aa).

An N5-methylglutamine modification is found at Q252.

This sequence belongs to the prokaryotic/mitochondrial release factor family. Methylated by PrmC. Methylation increases the termination efficiency of RF2.

It is found in the cytoplasm. Functionally, peptide chain release factor 2 directs the termination of translation in response to the peptide chain termination codons UGA and UAA. This is Peptide chain release factor 2 from Xanthomonas euvesicatoria pv. vesicatoria (strain 85-10) (Xanthomonas campestris pv. vesicatoria).